The following is a 130-amino-acid chain: Annexin A1 (130 aa).

Q19 is covalently cross-linked (Isoglutamyl lysine isopeptide (Gln-Lys) (interchain with K-?)). Residue S24 is modified to Phosphoserine; by PKC. Annexin repeat units lie at residues 37 to 108 (FDPS…ALLK) and 109 to 130 (TPAQFDAEELRASMKGLGTDRR). G54, V55, E57, K92, L95, E100, M122, G124, G126, T127, and R130 together coordinate Ca(2+).

The protein belongs to the annexin family.

It is found in the nucleus. It localises to the cytoplasm. The protein resides in the cell projection. Its subcellular location is the cilium. The protein localises to the basolateral cell membrane. It is found in the lateral cell membrane. It localises to the cell membrane. The protein resides in the apical cell membrane. Its subcellular location is the membrane. The protein localises to the early endosome. It is found in the cytoplasmic vesicle membrane. It localises to the endosome membrane. The protein resides in the secreted. Its subcellular location is the extracellular space. The protein localises to the extracellular exosome. It is found in the cytoplasmic vesicle. It localises to the secretory vesicle lumen. The protein resides in the phagocytic cup. Its function is as follows. Plays important roles in the innate immune response as effector of glucocorticoid-mediated responses and regulator of the inflammatory process. Has anti-inflammatory activity. Plays a role in glucocorticoid-mediated down-regulation of the early phase of the inflammatory response. Promotes resolution of inflammation and wound healing. Functions at least in part by activating the formyl peptide receptors and downstream signaling cascades. Promotes chemotaxis of granulocytes and monocytes via activation of the formyl peptide receptors. Contributes to the adaptive immune response by enhancing signaling cascades that are triggered by T-cell activation, regulates differentiation and proliferation of activated T-cells. Promotes the differentiation of T-cells into Th1 cells and negatively regulates differentiation into Th2 cells. Has no effect on unstimulated T-cells. Promotes rearrangement of the actin cytoskeleton, cell polarization and cell migration. Negatively regulates hormone exocytosis via activation of the formyl peptide receptors and reorganization of the actin cytoskeleton. Has high affinity for Ca(2+) and can bind up to eight Ca(2+) ions. Displays Ca(2+)-dependent binding to phospholipid membranes. Plays a role in the formation of phagocytic cups and phagosomes. Plays a role in phagocytosis by mediating the Ca(2+)-dependent interaction between phagosomes and the actin cytoskeleton. In Gallus gallus (Chicken), this protein is Annexin A1 (ANXA1).